The primary structure comprises 100 residues: MAKKSMIEREKKRQKLVAKYAELRKEIKEQMRLASSFEEKLNLHRKLQRLPRNSSSTRLHNRCAISGRPKAYYRDFGLSRHVFREMAHNCLLPGVTKSSW.

This sequence belongs to the universal ribosomal protein uS14 family. In terms of assembly, part of the 30S ribosomal subunit.

The protein localises to the plastid. Its subcellular location is the chloroplast. Functionally, binds 16S rRNA, required for the assembly of 30S particles. The protein is Small ribosomal subunit protein uS14c of Chlorokybus atmophyticus (Soil alga).